Reading from the N-terminus, the 339-residue chain is Purple acid phosphatase 4 (339 aa).

Positions 1–31 (MSSKFDIGSLSIVMTLLICFLLLSLAPKLEA) are cleaved as a signal peptide. Residue Asp-53 participates in Fe cation binding. Asn-61 carries N-linked (GlcNAc...) asparagine glycosylation. Asp-86 and Tyr-89 together coordinate Fe cation. Zn(2+) is bound at residue Asp-86. Zn(2+) is bound by residues Asn-124 and His-218. His-227 acts as the Proton donor in catalysis. His-253 lines the Zn(2+) pocket. A substrate-binding site is contributed by 253 to 255 (HDH). His-255 is a Fe cation binding site. Asn-284 carries an N-linked (GlcNAc...) asparagine glycan.

Belongs to the metallophosphoesterase superfamily. Purple acid phosphatase family. Homodimer. Fe cation serves as cofactor. Zn(2+) is required as a cofactor. As to expression, expressed in roots, stems, leaves, flowers and siliques.

The protein localises to the secreted. The enzyme catalyses a phosphate monoester + H2O = an alcohol + phosphate. The chain is Purple acid phosphatase 4 (PAP4) from Arabidopsis thaliana (Mouse-ear cress).